We begin with the raw amino-acid sequence, 689 residues long: Glycine--tRNA ligase beta subunit (689 aa).

The protein belongs to the class-II aminoacyl-tRNA synthetase family. Tetramer of two alpha and two beta subunits.

It localises to the cytoplasm. It carries out the reaction tRNA(Gly) + glycine + ATP = glycyl-tRNA(Gly) + AMP + diphosphate. This chain is Glycine--tRNA ligase beta subunit, found in Desulforapulum autotrophicum (strain ATCC 43914 / DSM 3382 / VKM B-1955 / HRM2) (Desulfobacterium autotrophicum).